A 1506-amino-acid chain; its full sequence is MFKPFGFAAETGSHLLTTQWLQLGNSLCLKERISIAMQVTFLAFFLIHLALKWFGVVRNRGSNDVEEDLKKQSITVKQSFSYNISLLCSVSILGTHCFILLLLFRDSVVSRCDSSVSVFSAEVSQSFSWLFVSVVVVKIRERRLVKFPWMLRSWWLCSFILSFSFDAHFITAKHEPLEFQDYADLTGLLASLFLLAVSIRGKTGFHLLESSGNTEPLLLGDQTEQNKKDSYSSSSPYGNATLFQRITFSWINPLFSLGYKRPLEKDDVPDIDVKDSARFCSHAFDQKLKTTKEKEGPGNAFFYNSVLRYVWRKAAINAVFAVVNASTAYIGPYLINDFVEFLSEKQSQSLNHGYLLALGFLTAKIVETVTQRQWIFGARQLGLRLRAALISHIYQKGLVLSSQSRQSHTSGEIINYMSVDVQRITDFIWYVNNIWMLPIQIFSAIYILQKHLGLGALAALVTTLMVMACNYPLTRLQRNYQSDIMNAKDDRMKATSEILKNMKILKLQAWDNQFLNKVKTLRKKEYDCLWKSLRLQAFTTFILWGAPSLISVVTFVTCMLMGVKLTAGAVLSALATFQMLQSPIFGLPDLLSALVQSKVSADRIASYLQQSETQKDAVEYCSKDHTELSVEIENGAFSWEPESSRPTLDDIELKVKSGMKVAVCGAVGSGKSSLLSSILGEIQKLKGTVRVSGKQAYVPQSPWILSGTIRDNILFGSMYESEKYERTVKACALIKDFELFSNGDLTEIGERGINMSGGQKQRIQIARAVYQNADIYLLDDPFSAVDAHTGRELFEDCLMGILKDKTVLYVTHQVEFLPAADLILVMQNGRVMQAGKFEELLKQNIGFEVLVGAHNEALDSILSIEKSSRNFKEGSKDDTASIAESLQTHCDSEHNISTENKKKEAKLVQDEETEKGVIGKEVYLAYLTTVKGGLLVPFIILAQSCFQMLQIASNYWMAWTAPPTAESIPKLGMGRILLVYALLAAGSSLCVLARTILVAIGGLSTAETFFSRMLCSIFRAPMSFFDSTPTGRILNRASTDQSVLDLEMAVKLGWCAFSIIQIVGTIFVMSQVAWQVCVIFIPVAVACVFYQRYYTPTARELSRMSGVERAPILHHFAESLAGATTIRAFDQRDRFISSNLVLIDSHSRPWFHVASAMEWLSFRLNLLSHFVFAFSLVLLVTLPEGVINPSIAGLGVTYGLSLNVLQATVIWNICNAENKMISVERILQYSKIPSEAPLVIDGHRPLDNWPNVGSIVFRDLQVRYAEHFPAVLKNITCEFPGGKKIGVVGRTGSGKSTLIQALFRIVEPSQGTIVIDNVDITKIGLHDLRSRLGIIPQDPALFDGTIRLNLDPLAQYTDHEIWEAIDKCQLGDVIRAKDERLDATVVENGENWSVGQRQLVCLGRVLLKKSNILVLDEATASVDSATDGVIQKIINQEFKDRTVVTIAHRIHTVIESDLVLVLSDGRIAEFDSPAKLLQREDSFFSKLIKEYSLRSNHFAGSNDLLS.

11 consecutive transmembrane segments (helical) span residues 37–57 (MQVT…FGVV), 84–104 (ISLL…LLLF), 116–136 (VSVF…SVVV), 150–170 (MLRS…AHFI), 179–199 (FQDY…AVSI), 315–335 (AINA…PYLI), 350–370 (LNHG…ETVT), 427–447 (FIWY…AIYI), 452–472 (LGLG…CNYP), 541–561 (FILW…CMLM), and 567–587 (AGAV…IFGL). The ABC transmembrane type-1 1 domain occupies 314–596 (AAINAVFAVV…LPDLLSALVQ (283 aa)). In terms of domain architecture, ABC transporter 1 spans 630 to 853 (VEIENGAFSW…NIGFEVLVGA (224 aa)). 665-672 (GAVGSGKS) contacts ATP. 5 consecutive transmembrane segments (helical) span residues 934-956 (LLVP…SNYW), 976-996 (ILLV…ARTI), 1048-1068 (MAVK…TIFV), 1167-1187 (LSHF…EGVI), and 1191-1211 (IAGL…TVIW). Residues 936-1218 (VPFIILAQSC…VIWNICNAEN (283 aa)) form the ABC transmembrane type-1 2 domain. The region spanning 1257–1489 (FRDLQVRYAE…EDSFFSKLIK (233 aa)) is the ABC transporter 2 domain. An ATP-binding site is contributed by 1289 to 1296 (GRTGSGKS).

Belongs to the ABC transporter superfamily. ABCC family. Conjugate transporter (TC 3.A.1.208) subfamily. In terms of tissue distribution, ubiquitous.

The protein localises to the membrane. The catalysed reaction is ATP + H2O + xenobioticSide 1 = ADP + phosphate + xenobioticSide 2.. Pump for glutathione S-conjugates. This Arabidopsis thaliana (Mouse-ear cress) protein is ABC transporter C family member 9 (ABCC9).